The chain runs to 208 residues: ATP phosphoribosyltransferase (208 aa).

Belongs to the ATP phosphoribosyltransferase family. Short subfamily. In terms of assembly, heteromultimer composed of HisG and HisZ subunits.

The protein localises to the cytoplasm. The catalysed reaction is 1-(5-phospho-beta-D-ribosyl)-ATP + diphosphate = 5-phospho-alpha-D-ribose 1-diphosphate + ATP. It participates in amino-acid biosynthesis; L-histidine biosynthesis; L-histidine from 5-phospho-alpha-D-ribose 1-diphosphate: step 1/9. Functionally, catalyzes the condensation of ATP and 5-phosphoribose 1-diphosphate to form N'-(5'-phosphoribosyl)-ATP (PR-ATP). Has a crucial role in the pathway because the rate of histidine biosynthesis seems to be controlled primarily by regulation of HisG enzymatic activity. In Thermotoga maritima (strain ATCC 43589 / DSM 3109 / JCM 10099 / NBRC 100826 / MSB8), this protein is ATP phosphoribosyltransferase (hisG).